A 402-amino-acid chain; its full sequence is Flavohemoprotein (402 aa).

Residues Met-1–Ala-136 enclose the Globin domain. His-85 provides a ligand contact to heme b. Catalysis depends on charge relay system residues Tyr-95 and Glu-135. The reductase stretch occupies residues Gly-147–Gln-402. An FAD-binding FR-type domain is found at Lys-150–Asn-260. FAD contacts are provided by residues Tyr-188 and Arg-204–Ser-207. Gly-273–Pro-278 contacts NADP(+). Phe-394 to Pro-397 is an FAD binding site.

The protein belongs to the globin family. Two-domain flavohemoproteins subfamily. This sequence in the C-terminal section; belongs to the flavoprotein pyridine nucleotide cytochrome reductase family. Heme b serves as cofactor. FAD is required as a cofactor.

The catalysed reaction is 2 nitric oxide + NADPH + 2 O2 = 2 nitrate + NADP(+) + H(+). It carries out the reaction 2 nitric oxide + NADH + 2 O2 = 2 nitrate + NAD(+) + H(+). Is involved in NO detoxification in an aerobic process, termed nitric oxide dioxygenase (NOD) reaction that utilizes O(2) and NAD(P)H to convert NO to nitrate, which protects the bacterium from various noxious nitrogen compounds. Therefore, plays a central role in the inducible response to nitrosative stress. The chain is Flavohemoprotein from Bacillus cereus (strain ATCC 14579 / DSM 31 / CCUG 7414 / JCM 2152 / NBRC 15305 / NCIMB 9373 / NCTC 2599 / NRRL B-3711).